The sequence spans 1068 residues: Carbamoyl phosphate synthase large chain (1068 aa).

The tract at residues 1 to 403 is carboxyphosphate synthetic domain; the sequence is MPKRTDINTI…SLQKALRGLE (403 aa). ATP-binding residues include arginine 129, arginine 169, glycine 175, glycine 176, glutamine 208, valine 210, glutamate 215, glycine 241, valine 242, histidine 243, glutamine 285, and glutamate 299. Residues 133 to 328 form the ATP-grasp 1 domain; it reads KEAMEKIGLS…IAKVAAKLAV (196 aa). Positions 285, 299, and 301 each coordinate Mg(2+). Glutamine 285, glutamate 299, and asparagine 301 together coordinate Mn(2+). Residues 404-548 are oligomerization domain; it reads TGICGFNLMS…YSTYEEECES (145 aa). Residues 549–930 are carbamoyl phosphate synthetic domain; it reads RPSDKKKIMI…AFLKAQLGAN (382 aa). The region spanning 673–864 is the ATP-grasp 2 domain; that stretch reads QQILHKLHLK…LAKIAARVMA (192 aa). Arginine 709, histidine 748, leucine 750, glutamate 755, glycine 780, isoleucine 781, histidine 782, serine 783, glutamine 823, and glutamate 835 together coordinate ATP. Mg(2+) contacts are provided by glutamine 823, glutamate 835, and asparagine 837. Mn(2+) is bound by residues glutamine 823, glutamate 835, and asparagine 837. One can recognise an MGS-like domain in the interval 931-1068; that stretch reads ERIPKTGKVF…SLQDLHQRLL (138 aa). The segment at 931 to 1068 is allosteric domain; that stretch reads ERIPKTGKVF…SLQDLHQRLL (138 aa).

This sequence belongs to the CarB family. Composed of two chains; the small (or glutamine) chain promotes the hydrolysis of glutamine to ammonia, which is used by the large (or ammonia) chain to synthesize carbamoyl phosphate. Tetramer of heterodimers (alpha,beta)4. Mg(2+) serves as cofactor. Mn(2+) is required as a cofactor.

It carries out the reaction hydrogencarbonate + L-glutamine + 2 ATP + H2O = carbamoyl phosphate + L-glutamate + 2 ADP + phosphate + 2 H(+). It catalyses the reaction hydrogencarbonate + NH4(+) + 2 ATP = carbamoyl phosphate + 2 ADP + phosphate + 2 H(+). Its pathway is amino-acid biosynthesis; L-arginine biosynthesis; carbamoyl phosphate from bicarbonate: step 1/1. It participates in pyrimidine metabolism; UMP biosynthesis via de novo pathway; (S)-dihydroorotate from bicarbonate: step 1/3. Large subunit of the glutamine-dependent carbamoyl phosphate synthetase (CPSase). CPSase catalyzes the formation of carbamoyl phosphate from the ammonia moiety of glutamine, carbonate, and phosphate donated by ATP, constituting the first step of 2 biosynthetic pathways, one leading to arginine and/or urea and the other to pyrimidine nucleotides. The large subunit (synthetase) binds the substrates ammonia (free or transferred from glutamine from the small subunit), hydrogencarbonate and ATP and carries out an ATP-coupled ligase reaction, activating hydrogencarbonate by forming carboxy phosphate which reacts with ammonia to form carbamoyl phosphate. The protein is Carbamoyl phosphate synthase large chain of Pasteurella multocida (strain Pm70).